Here is a 550-residue protein sequence, read N- to C-terminus: Glucose-6-phosphate isomerase 2 (550 aa).

Catalysis depends on Glu-357, which acts as the Proton donor. Residues His-388 and Lys-514 contribute to the active site. The interval 527-550 is disordered; the sequence is DTGALGHDSSTNGLIRHYRERHGK.

Belongs to the GPI family.

It is found in the cytoplasm. The catalysed reaction is alpha-D-glucose 6-phosphate = beta-D-fructose 6-phosphate. Its pathway is carbohydrate biosynthesis; gluconeogenesis. The protein operates within carbohydrate degradation; glycolysis; D-glyceraldehyde 3-phosphate and glycerone phosphate from D-glucose: step 2/4. Functionally, catalyzes the reversible isomerization of glucose-6-phosphate to fructose-6-phosphate. The sequence is that of Glucose-6-phosphate isomerase 2 from Chromobacterium violaceum (strain ATCC 12472 / DSM 30191 / JCM 1249 / CCUG 213 / NBRC 12614 / NCIMB 9131 / NCTC 9757 / MK).